The chain runs to 578 residues: Hemolysin 4 (578 aa).

Residues 289–322 are disordered; that stretch reads KDGPKASWRRRPSSASSVTMPTTPRIIGSNARPE. The Ricin B-type lectin domain occupies 448-539; the sequence is RPVNLQLGGF…LSNLSAHQLL (92 aa).

This sequence belongs to the HlyA hemolysin family.

Its function is as follows. Bacterial hemolysins are exotoxins that attack blood cell membranes and cause cell rupture by mechanisms not clearly defined. The protein is Hemolysin 4 (ash4) of Aeromonas salmonicida.